Reading from the N-terminus, the 448-residue chain is ATP-dependent protease ATPase subunit HslU (448 aa).

ATP is bound by residues isoleucine 18, 60–65, aspartate 261, glutamate 326, and arginine 398; that span reads GVGKTE.

It belongs to the ClpX chaperone family. HslU subfamily. In terms of assembly, a double ring-shaped homohexamer of HslV is capped on each side by a ring-shaped HslU homohexamer. The assembly of the HslU/HslV complex is dependent on binding of ATP.

It localises to the cytoplasm. Functionally, ATPase subunit of a proteasome-like degradation complex; this subunit has chaperone activity. The binding of ATP and its subsequent hydrolysis by HslU are essential for unfolding of protein substrates subsequently hydrolyzed by HslV. HslU recognizes the N-terminal part of its protein substrates and unfolds these before they are guided to HslV for hydrolysis. The chain is ATP-dependent protease ATPase subunit HslU from Paraburkholderia phytofirmans (strain DSM 17436 / LMG 22146 / PsJN) (Burkholderia phytofirmans).